The primary structure comprises 314 residues: MPLGLRGKKKAAKSKETARLVEGERSGGSQGVPGPPAPARRLVFHAQLAHGSATGRVEDFSSISELYAKIAGVFEIAPSEILFCTLNTPKIDMGKLLGGQLGLEDFIFAHVKGIKKEVNVYKSEDSLGLTITDNGVGYAFIKRIKDGSTIDSVKTICVGDHIECINGENIVGWRHFEVAKKLKELKKEELFTLQLIEPKKAFEIGPRSKAGKTSTEKIGTSRGTLRLRSKGPATVEDLPSEAKAKAIEKVDDLLELYMGIRDIDLATTMFEAGKDKSNPDEFAVALDETLGDFAFPDEFMFDVWGAISDVKQGR.

Positions methionine 1–alanine 12 are enriched in basic residues. Positions methionine 1–proline 36 are disordered. A compositionally biased stretch (basic and acidic residues) spans lysine 13–arginine 25. Residues glutamate 117–glutamate 197 enclose the PDZ domain.

It belongs to the GIPC family. In terms of assembly, probably interacts with SEMA5A.

Its subcellular location is the cytoplasm. The polypeptide is PDZ domain-containing protein GIPC2 (Gipc2) (Rattus norvegicus (Rat)).